The following is a 143-amino-acid chain: 3-hydroxyacyl-[acyl-carrier-protein] dehydratase FabZ (143 aa).

Residue histidine 48 is part of the active site.

Belongs to the thioester dehydratase family. FabZ subfamily.

It is found in the cytoplasm. The enzyme catalyses a (3R)-hydroxyacyl-[ACP] = a (2E)-enoyl-[ACP] + H2O. Involved in unsaturated fatty acids biosynthesis. Catalyzes the dehydration of short chain beta-hydroxyacyl-ACPs and long chain saturated and unsaturated beta-hydroxyacyl-ACPs. The chain is 3-hydroxyacyl-[acyl-carrier-protein] dehydratase FabZ from Roseiflexus sp. (strain RS-1).